Consider the following 445-residue polypeptide: Na(+)-translocating NADH-quinone reductase subunit A (445 aa).

The protein belongs to the NqrA family. As to quaternary structure, composed of six subunits; NqrA, NqrB, NqrC, NqrD, NqrE and NqrF.

It catalyses the reaction a ubiquinone + n Na(+)(in) + NADH + H(+) = a ubiquinol + n Na(+)(out) + NAD(+). Its function is as follows. NQR complex catalyzes the reduction of ubiquinone-1 to ubiquinol by two successive reactions, coupled with the transport of Na(+) ions from the cytoplasm to the periplasm. NqrA to NqrE are probably involved in the second step, the conversion of ubisemiquinone to ubiquinol. The polypeptide is Na(+)-translocating NADH-quinone reductase subunit A (Teredinibacter turnerae (strain ATCC 39867 / T7901)).